The primary structure comprises 725 residues: Methionine--tRNA ligase (725 aa).

The short motif at 27–37 (PYANGQIHIGH) is the 'HIGH' region element. Residues cysteine 158, cysteine 161, cysteine 171, and cysteine 174 each coordinate Zn(2+). The 'KMSKS' region signature appears at 348 to 352 (KMSKS). Lysine 351 is an ATP binding site. The region spanning 619 to 725 (DFAKIDLRIA…SGAKPGMRVK (107 aa)) is the tRNA-binding domain.

It belongs to the class-I aminoacyl-tRNA synthetase family. MetG type 1 subfamily. Homodimer. Zn(2+) serves as cofactor.

It is found in the cytoplasm. The catalysed reaction is tRNA(Met) + L-methionine + ATP = L-methionyl-tRNA(Met) + AMP + diphosphate. Its function is as follows. Is required not only for elongation of protein synthesis but also for the initiation of all mRNA translation through initiator tRNA(fMet) aminoacylation. The sequence is that of Methionine--tRNA ligase from Burkholderia pseudomallei (strain 668).